The chain runs to 42 residues: Large ribosomal subunit protein bL36 (42 aa).

This sequence belongs to the bacterial ribosomal protein bL36 family.

The protein is Large ribosomal subunit protein bL36 of Ehrlichia chaffeensis (strain ATCC CRL-10679 / Arkansas).